Consider the following 152-residue polypeptide: UPF0266 membrane protein YobD (152 aa).

3 helical membrane-spanning segments follow: residues 6–26 (LVLI…QFIM), 45–65 (IDSV…VTNH), and 67–87 (ALIT…IFWI).

This sequence belongs to the UPF0266 family.

It is found in the cell inner membrane. The polypeptide is UPF0266 membrane protein YobD (Shigella boydii serotype 18 (strain CDC 3083-94 / BS512)).